The primary structure comprises 131 residues: Hypocretin neuropeptide precursor (131 aa).

At Gln-34 the chain carries Pyrrolidone carboxylic acid. 2 disulfides stabilise this stretch: Cys-39–Cys-45 and Cys-40–Cys-47. The residue at position 66 (Leu-66) is a Leucine amide. The disordered stretch occupies residues 104-131 (EPALRPCSGRRCPSEAASSVAPGGRSGV).

This sequence belongs to the orexin family.

Its subcellular location is the rough endoplasmic reticulum. It is found in the cytoplasmic vesicle. The protein localises to the synapse. Its function is as follows. Neuropeptides that play a significant role in the regulation of food intake and sleep-wakefulness, possibly by coordinating the complex behavioral and physiologic responses of these complementary homeostatic functions. A broader role in the homeostatic regulation of energy metabolism, autonomic function, hormonal balance and the regulation of body fluids, is also suggested. In terms of biological role, binds to orexin receptors HCRTR1/OX1R and HCRTR2/OX2R with a high affinity. Stimulates food intake. Modulates pituitary luteinizing hormone secretion in an ovarian steroid-dependent manner. Functionally, binds to orexin receptor HCRTR2/OX2R only. Stimulates food intake. Modulates pituitary luteinizing hormone secretion in an ovarian steroid-dependent manner. The chain is Hypocretin neuropeptide precursor (HCRT) from Bos taurus (Bovine).